A 244-amino-acid chain; its full sequence is Putative lipoprotein LprA (244 aa).

The N-terminal stretch at 1–24 is a signal peptide; sequence MKHPPCSVVAAATAILAVVLAIGG. A lipid anchor (N-palmitoyl cysteine) is attached at C25. Residue C25 is the site of S-diacylglycerol cysteine attachment.

The protein belongs to the LppX/LprAFG lipoprotein family.

It is found in the cell membrane. In Mycobacterium bovis (strain ATCC BAA-935 / AF2122/97), this protein is Putative lipoprotein LprA (lprA).